Consider the following 271-residue polypeptide: Protein FAM110D (271 aa).

Disordered stretches follow at residues 1–83 (MLLA…RPDS), 116–145 (PRDAAPSSPASTERPAASGGWAAPQDAPEA), and 186–245 (PQSW…PVSV). Residues 68-78 (RPVRRGSGRRL) show a composition bias toward basic residues. Positions 116 to 126 (PRDAAPSSPAS) are enriched in low complexity. Positions 220–231 (SPGGAGGGGGSE) are enriched in gly residues.

The protein belongs to the FAM110 family.

This Homo sapiens (Human) protein is Protein FAM110D (FAM110D).